The following is a 293-amino-acid chain: GTPase Era (293 aa).

Residues 3–170 (KSGFITIIGR…VELMVKYMPE (168 aa)) form the Era-type G domain. Residues 11–18 (GRPNVGKS) form a G1 region. GTP is bound at residue 11–18 (GRPNVGKS). The segment at 37 to 41 (QTTRN) is G2. The segment at 58–61 (DTPG) is G3. Residues 58–62 (DTPGI) and 120–123 (NKID) each bind GTP. Positions 120–123 (NKID) are G4. The G5 stretch occupies residues 149 to 151 (ISA). The region spanning 201–278 (LSKEVPHGIA…YLEVWVKVKK (78 aa)) is the KH type-2 domain.

It belongs to the TRAFAC class TrmE-Era-EngA-EngB-Septin-like GTPase superfamily. Era GTPase family. As to quaternary structure, monomer.

The protein resides in the cytoplasm. The protein localises to the cell membrane. In terms of biological role, an essential GTPase that binds both GDP and GTP, with rapid nucleotide exchange. Plays a role in 16S rRNA processing and 30S ribosomal subunit biogenesis and possibly also in cell cycle regulation and energy metabolism. The polypeptide is GTPase Era (Clostridium kluyveri (strain NBRC 12016)).